The sequence spans 1922 residues: Endoribonuclease Dicer (1922 aa).

The region spanning 51–227 is the Helicase ATP-binding domain; sequence LLEAALDHNT…ELEEKIQKLE (177 aa). 64–71 contacts ATP; that stretch reads LNTGSGKT. Residues 175 to 178 carry the DECH box motif; that stretch reads DECH. The tract at residues 256–595 is required for interaction with PRKRA and TARBP2; that stretch reads DCGPFTDRSG…LRNKCSKSVD (340 aa). The interval 409 to 433 is disordered; it reads YVSWSDSEDDDEDEEIEEKEKPETN. Phosphoserine occurs at positions 413 and 415. Residues 414-425 show a composition bias toward acidic residues; it reads DSEDDDEDEEIE. In terms of domain architecture, Helicase C-terminal spans 433–602; it reads NFPSPFTNIL…SVDTGETDID (170 aa). Positions 630–722 constitute a Dicer dsRNA-binding fold domain; that stretch reads AIGHINRYCA…MPVGKETVKY (93 aa). One can recognise a PAZ domain in the interval 895–1042; that stretch reads KFMEDIEKSE…LVPELCAIHP (148 aa). 2 positions are modified to phosphoserine: Ser-1016 and Ser-1160. The 128-residue stretch at 1276 to 1403 folds into the RNase III 1 domain; it reads DSEQSPSIGY…TDKWEKDEMT (128 aa). Mg(2+)-binding residues include Glu-1316, Asp-1395, and Glu-1398. Phosphoserine is present on residues Ser-1460, Ser-1468, and Ser-1470. The 159-residue stretch at 1666-1824 folds into the RNase III 2 domain; sequence FENFEKKINY…LAGAIYMDSG (159 aa). Positions 1705, 1810, and 1813 each coordinate Mg(2+). The DRBM domain occupies 1849–1914; that stretch reads VPRSPVRELL…ARRALRSLKA (66 aa). Ser-1868 carries the phosphoserine modification.

It belongs to the helicase family. Dicer subfamily. In terms of assembly, component of the RISC loading complex (RLC), or micro-RNA (miRNA) loading complex (miRLC), which is composed of DICER1, AGO2 and TARBP2; DICER1 and TARBP2 are required to process precursor miRNAs (pre-miRNAs) to mature miRNAs and then load them onto AGO2. Note that the trimeric RLC/miRLC is also referred to as RISC. Interacts with DHX9, AGO1, PIWIL1 and PRKRA. Associates with the 60S ribosome. Interacts with BCDIN3D. Interacts with AGO2, TARBP2, EIF6, MOV10 and RPL7A (60S ribosome subunit); they form a large RNA-induced silencing complex (RISC). Interacts (via Dicer dsRNA-binding fold domain) with ALOX5 (via PLAT domain); this interaction enhances arachidonate 5-lipoxygenase activity and modifies the miRNA precursor processing activity of DICER1. (Microbial infection) Interacts with ebolavirus transcriptional activator VP30; this interaction prevents TARBP2/TRBP binding to DICER1 and thus allows the virus to counteract host RNA silencing. As to quaternary structure, (Microbial infection) Interacts with ebolavirus transcriptional activator VP35; this interaction prevents TARBP2/TRBP binding to DICER1 and thus allows the virus to counteract host RNA silencing. Mg(2+) is required as a cofactor. Requires Mn(2+) as cofactor.

The protein resides in the cytoplasm. The protein localises to the perinuclear region. It carries out the reaction Endonucleolytic cleavage to 5'-phosphomonoester.. Double-stranded RNA (dsRNA) endoribonuclease playing a central role in short dsRNA-mediated post-transcriptional gene silencing. Cleaves naturally occurring long dsRNAs and short hairpin pre-microRNAs (miRNA) into fragments of twenty-one to twenty-three nucleotides with 3' overhang of two nucleotides, producing respectively short interfering RNAs (siRNA) and mature microRNAs. SiRNAs and miRNAs serve as guide to direct the RNA-induced silencing complex (RISC) to complementary RNAs to degrade them or prevent their translation. Gene silencing mediated by siRNAs, also called RNA interference, controls the elimination of transcripts from mobile and repetitive DNA elements of the genome but also the degradation of exogenous RNA of viral origin for instance. The miRNA pathway on the other side is a mean to specifically regulate the expression of target genes. The polypeptide is Endoribonuclease Dicer (DICER1) (Homo sapiens (Human)).